The sequence spans 727 residues: Polyribonucleotide nucleotidyltransferase (727 aa).

2 residues coordinate Mg(2+): aspartate 491 and aspartate 497. A KH domain is found at proline 558–isoleucine 617. The S1 motif domain maps to glycine 627–lysine 701. Positions leucine 698–serine 727 are disordered. Positions glycine 717–serine 727 are enriched in polar residues.

The protein belongs to the polyribonucleotide nucleotidyltransferase family. Mg(2+) is required as a cofactor.

It localises to the cytoplasm. It carries out the reaction RNA(n+1) + phosphate = RNA(n) + a ribonucleoside 5'-diphosphate. Functionally, involved in mRNA degradation. Catalyzes the phosphorolysis of single-stranded polyribonucleotides processively in the 3'- to 5'-direction. This chain is Polyribonucleotide nucleotidyltransferase, found in Desulfitobacterium hafniense (strain Y51).